The following is a 330-amino-acid chain: Interleukin-12 subunit beta (330 aa).

The N-terminal stretch at 1–22 (MHPQQLVVSWFSLVLLASPIMA) is a signal peptide. An Ig-like C2-type domain is found at 23–106 (IWELEKNVYV…LSHSLLLLHK (84 aa)). A disulfide bridge links Cys50 with Cys90. Asn136 and Asn224 each carry an N-linked (GlcNAc...) asparagine glycan. In terms of domain architecture, Fibronectin type-III spans 239 to 330 (PPKNLQLKPL…WSEWASVSCS (92 aa)).

The protein belongs to the IL-12B family. As to quaternary structure, heterodimer with IL12A; disulfide-linked. The heterodimer is known as interleukin IL-12. Heterodimer with IL23A; disulfide-linked. The heterodimer is known as interleukin IL-23. Also secreted as a monomer. Interacts with NBR1; this interaction promotes IL-12 secretion.

The protein localises to the secreted. Functionally, cytokine that can act as a growth factor for activated T and NK cells, enhance the lytic activity of NK/lymphokine-activated killer cells, and stimulate the production of IFN-gamma by resting PBMC. In terms of biological role, associates with IL23A to form the IL-23 interleukin, a heterodimeric cytokine which functions in innate and adaptive immunity. IL-23 may constitute with IL-17 an acute response to infection in peripheral tissues. IL-23 binds to a heterodimeric receptor complex composed of IL12RB1 and IL23R, activates the Jak-Stat signaling cascade, stimulates memory rather than naive T-cells and promotes production of pro-inflammatory cytokines. IL-23 induces autoimmune inflammation and thus may be responsible for autoimmune inflammatory diseases and may be important for tumorigenesis. This is Interleukin-12 subunit beta (IL12B) from Lama glama (Llama).